A 326-amino-acid chain; its full sequence is Alkanal monooxygenase beta chain (326 aa).

The protein belongs to the bacterial luciferase oxidoreductase family. Heterodimer of an alpha and a beta chain.

The enzyme catalyses a long-chain fatty aldehyde + FMNH2 + O2 = a long-chain fatty acid + hnu + FMN + H2O + 2 H(+). Light-emitting reaction in luminous bacteria. The specific role of the beta subunit is unknown, but it is absolutely required for bioluminescence activity. This is Alkanal monooxygenase beta chain (luxB) from Photobacterium leiognathi.